A 270-amino-acid polypeptide reads, in one-letter code: UPF0354 protein BC_4690 (270 aa).

Belongs to the UPF0354 family.

This chain is UPF0354 protein BC_4690, found in Bacillus cereus (strain ATCC 14579 / DSM 31 / CCUG 7414 / JCM 2152 / NBRC 15305 / NCIMB 9373 / NCTC 2599 / NRRL B-3711).